The following is a 308-amino-acid chain: Aspartate carbamoyltransferase catalytic subunit (308 aa).

The carbamoyl phosphate site is built by Arg-55 and Thr-56. An L-aspartate-binding site is contributed by Lys-84. 3 residues coordinate carbamoyl phosphate: Arg-105, His-133, and Gln-136. Residues Arg-167 and Arg-228 each coordinate L-aspartate. Carbamoyl phosphate is bound by residues Leu-267 and Pro-268.

This sequence belongs to the aspartate/ornithine carbamoyltransferase superfamily. ATCase family. Heterooligomer of catalytic and regulatory chains.

The catalysed reaction is carbamoyl phosphate + L-aspartate = N-carbamoyl-L-aspartate + phosphate + H(+). It functions in the pathway pyrimidine metabolism; UMP biosynthesis via de novo pathway; (S)-dihydroorotate from bicarbonate: step 2/3. Its function is as follows. Catalyzes the condensation of carbamoyl phosphate and aspartate to form carbamoyl aspartate and inorganic phosphate, the committed step in the de novo pyrimidine nucleotide biosynthesis pathway. This is Aspartate carbamoyltransferase catalytic subunit from Methanocella arvoryzae (strain DSM 22066 / NBRC 105507 / MRE50).